The primary structure comprises 179 residues: Large ribosomal subunit protein uL10 (179 aa).

The protein belongs to the universal ribosomal protein uL10 family. As to quaternary structure, part of the ribosomal stalk of the 50S ribosomal subunit. The N-terminus interacts with L11 and the large rRNA to form the base of the stalk. The C-terminus forms an elongated spine to which L12 dimers bind in a sequential fashion forming a multimeric L10(L12)X complex.

In terms of biological role, forms part of the ribosomal stalk, playing a central role in the interaction of the ribosome with GTP-bound translation factors. This chain is Large ribosomal subunit protein uL10, found in Thermomicrobium roseum (strain ATCC 27502 / DSM 5159 / P-2).